The primary structure comprises 468 residues: ATP synthase subunit beta (468 aa).

155–162 (GGAGVGKT) lines the ATP pocket.

The protein belongs to the ATPase alpha/beta chains family. As to quaternary structure, F-type ATPases have 2 components, CF(1) - the catalytic core - and CF(0) - the membrane proton channel. CF(1) has five subunits: alpha(3), beta(3), gamma(1), delta(1), epsilon(1). CF(0) has three main subunits: a(1), b(2) and c(9-12). The alpha and beta chains form an alternating ring which encloses part of the gamma chain. CF(1) is attached to CF(0) by a central stalk formed by the gamma and epsilon chains, while a peripheral stalk is formed by the delta and b chains.

Its subcellular location is the cell membrane. It carries out the reaction ATP + H2O + 4 H(+)(in) = ADP + phosphate + 5 H(+)(out). Its function is as follows. Produces ATP from ADP in the presence of a proton gradient across the membrane. The catalytic sites are hosted primarily by the beta subunits. The protein is ATP synthase subunit beta of Streptococcus uberis (strain ATCC BAA-854 / 0140J).